The sequence spans 471 residues: Glutamate--tRNA ligase (471 aa).

The 'HIGH' region signature appears at 9-19 (PSPTGYLHVGG). Residues Cys-98, Cys-100, Cys-125, and His-127 each coordinate Zn(2+). Residues 237–241 (KLSKR) carry the 'KMSKS' region motif. Lys-240 provides a ligand contact to ATP.

The protein belongs to the class-I aminoacyl-tRNA synthetase family. Glutamate--tRNA ligase type 1 subfamily. As to quaternary structure, monomer. The cofactor is Zn(2+).

It localises to the cytoplasm. It carries out the reaction tRNA(Glu) + L-glutamate + ATP = L-glutamyl-tRNA(Glu) + AMP + diphosphate. Catalyzes the attachment of glutamate to tRNA(Glu) in a two-step reaction: glutamate is first activated by ATP to form Glu-AMP and then transferred to the acceptor end of tRNA(Glu). The protein is Glutamate--tRNA ligase of Salmonella enteritidis PT4 (strain P125109).